The sequence spans 218 residues: Imidazole glycerol phosphate synthase subunit HisH (218 aa).

One can recognise a Glutamine amidotransferase type-1 domain in the interval 5 to 213; it reads RLAVIDYEAG…VEFVARCSPL (209 aa). Cys-83 (nucleophile) is an active-site residue. Catalysis depends on residues His-188 and Glu-190.

Heterodimer of HisH and HisF.

The protein resides in the cytoplasm. The catalysed reaction is 5-[(5-phospho-1-deoxy-D-ribulos-1-ylimino)methylamino]-1-(5-phospho-beta-D-ribosyl)imidazole-4-carboxamide + L-glutamine = D-erythro-1-(imidazol-4-yl)glycerol 3-phosphate + 5-amino-1-(5-phospho-beta-D-ribosyl)imidazole-4-carboxamide + L-glutamate + H(+). It catalyses the reaction L-glutamine + H2O = L-glutamate + NH4(+). It participates in amino-acid biosynthesis; L-histidine biosynthesis; L-histidine from 5-phospho-alpha-D-ribose 1-diphosphate: step 5/9. In terms of biological role, IGPS catalyzes the conversion of PRFAR and glutamine to IGP, AICAR and glutamate. The HisH subunit catalyzes the hydrolysis of glutamine to glutamate and ammonia as part of the synthesis of IGP and AICAR. The resulting ammonia molecule is channeled to the active site of HisF. The chain is Imidazole glycerol phosphate synthase subunit HisH from Synechococcus sp. (strain JA-2-3B'a(2-13)) (Cyanobacteria bacterium Yellowstone B-Prime).